We begin with the raw amino-acid sequence, 965 residues long: MALTLTPTSSVHLLSSISVARPRIFAADFNLRSRWRRRRPVTSISNFRLRLPSKTSLHCLCSSSSASSPMSLEVSSPNSQFLDCLIYSRAYWVTQGVIAWNVDVGEGSCYFYASKSAGLSFSEDGIDGYDLRIKLEAESGSLPADVIEKFPHIRNYKSFKVPKDLDIRDLVKSQLAVVCFDAEGRLIQGTGLQLPGVLDELFSYDGPLGAHFTPEGVSLHLWAPTAQAVSVCIYKNPLDKSPMEICPLKEANGVWSTEGACSWGGCYYVYKVSVYHPSTMKLETCYANDPYARGLSADGRKTFLVNLDSDDLKPEGWDNLADKKPCLRSFSDISIYELHVRDFSANDETVEPENRGGYLAFTSKDSAGVKHLQKLVDAGLTHLHLLPTFQFGDVDDEKENWKSVDTSLLEGLRPDSTEAQARITEIQNDDGYNWGYNPVLWGVPKGSYASDPTGPCRIIEFRKMVQALNCTGLNVVLDVVYNHLHASGPHDKESVLDKIVPGYYLRRNSDGFIENSTCVNNTASEHYMVDRLIRDDLLNWVVNYKVDGFRFDLMGHIMKATIVNAKSAIGSLRKETDGVDGSRIYLYGEGWNFGEVAENGRGINASQFNLGGTGIGSFNDRIRDATLGGSPFGHPLQQGFITGLLLQPNAHDHGSEATQELMLSTAKNHIQTGMAANLKDYMLTNHEGKEVKGSEVLMHDATPVAYASLPTETINYVSAHDNETLFDIISLKTPMEISVDERCRINHLASSMIALSQGIPFFHAGDEILRSKSLDRDSYNSGDWFNRLDFSYSSNNWGVGLPPKGKNEHNWPLIKPRLQDPSFKPKSSHIVATLHNFLDLLRIRYSSPLFRLDTARAIQERVRFHNTGPSSIPGAIVMSIEDGHRGIPSVSQIDPIYSLIVVIFNARPSEFSYPSPALKDRKLELHPVQVMSADEIVKKSVYDSFSGGFTVPARTTTVFVESRNG.

A chloroplast-targeting transit peptide spans 1–62 (MALTLTPTSS…SKTSLHCLCS (62 aa)). The Nucleophile role is filled by aspartate 552. Residue glutamate 589 is the Proton donor of the active site.

It belongs to the glycosyl hydrolase 13 family.

It localises to the plastid. The protein resides in the chloroplast stroma. The enzyme catalyses Hydrolysis of (1-&gt;6)-alpha-D-glucosidic linkages in alpha- and beta-limit dextrins of amylopectin and glycogen, and in amylopectin and pullulan.. The protein operates within glycan biosynthesis; starch biosynthesis. Its pathway is glycan degradation; starch degradation. Its function is as follows. Involved in starch degradation and also probably in the trimming of pre-amylopectin chains during starch synthesis. The sequence is that of Pullulanase 1, chloroplastic (PU1) from Arabidopsis thaliana (Mouse-ear cress).